Consider the following 182-residue polypeptide: Inosine/xanthosine triphosphatase (182 aa).

This sequence belongs to the YjjX NTPase family. In terms of assembly, homodimer. Mg(2+) serves as cofactor. The cofactor is Mn(2+).

The enzyme catalyses XTP + H2O = XDP + phosphate + H(+). The catalysed reaction is ITP + H2O = IDP + phosphate + H(+). Functionally, phosphatase that hydrolyzes non-canonical purine nucleotides such as XTP and ITP to their respective diphosphate derivatives. Probably excludes non-canonical purines from DNA/RNA precursor pool, thus preventing their incorporation into DNA/RNA and avoiding chromosomal lesions. The polypeptide is Inosine/xanthosine triphosphatase (Vibrio parahaemolyticus serotype O3:K6 (strain RIMD 2210633)).